The chain runs to 397 residues: Acetate kinase (397 aa).

Asparagine 7 is a Mg(2+) binding site. Lysine 14 lines the ATP pocket. Residue arginine 88 participates in substrate binding. Aspartate 145 functions as the Proton donor/acceptor in the catalytic mechanism. Residues 205-209 (HLGNG), 279-281 (DMR), and 326-330 (GIGEN) each bind ATP. Residue glutamate 380 coordinates Mg(2+).

The protein belongs to the acetokinase family. Homodimer. Mg(2+) is required as a cofactor. Requires Mn(2+) as cofactor.

The protein resides in the cytoplasm. It catalyses the reaction acetate + ATP = acetyl phosphate + ADP. Its pathway is metabolic intermediate biosynthesis; acetyl-CoA biosynthesis; acetyl-CoA from acetate: step 1/2. In terms of biological role, catalyzes the formation of acetyl phosphate from acetate and ATP. Can also catalyze the reverse reaction. The sequence is that of Acetate kinase from Campylobacter concisus (strain 13826).